A 234-amino-acid polypeptide reads, in one-letter code: Ribose-5-phosphate isomerase A (234 aa).

Substrate-binding positions include 28–31, 85–88, and 98–101; these read TGST, DGAD, and KGLG. Glutamate 107 serves as the catalytic Proton acceptor. Lysine 125 provides a ligand contact to substrate.

It belongs to the ribose 5-phosphate isomerase family. In terms of assembly, homodimer.

The catalysed reaction is aldehydo-D-ribose 5-phosphate = D-ribulose 5-phosphate. Its pathway is carbohydrate degradation; pentose phosphate pathway; D-ribose 5-phosphate from D-ribulose 5-phosphate (non-oxidative stage): step 1/1. Functionally, catalyzes the reversible conversion of ribose-5-phosphate to ribulose 5-phosphate. This is Ribose-5-phosphate isomerase A from Roseiflexus castenholzii (strain DSM 13941 / HLO8).